The sequence spans 417 residues: NADH-quinone oxidoreductase subunit D (417 aa).

The protein belongs to the complex I 49 kDa subunit family. NDH-1 is composed of 14 different subunits. Subunits NuoB, C, D, E, F, and G constitute the peripheral sector of the complex.

The protein resides in the cell inner membrane. It carries out the reaction a quinone + NADH + 5 H(+)(in) = a quinol + NAD(+) + 4 H(+)(out). Its function is as follows. NDH-1 shuttles electrons from NADH, via FMN and iron-sulfur (Fe-S) centers, to quinones in the respiratory chain. The immediate electron acceptor for the enzyme in this species is believed to be ubiquinone. Couples the redox reaction to proton translocation (for every two electrons transferred, four hydrogen ions are translocated across the cytoplasmic membrane), and thus conserves the redox energy in a proton gradient. The polypeptide is NADH-quinone oxidoreductase subunit D (Coxiella burnetii (strain CbuG_Q212) (Coxiella burnetii (strain Q212))).